We begin with the raw amino-acid sequence, 453 residues long: MTTDTIVAQATAPGRGGVGIIRVSGPQAAQVALEVTGKTLKARYAEYLPFKAQDGSELDQGIALFFPNPHSFTGEDVLELQGHGGPVVMDMLIKRILTISGVRPARPGEFSERAFLNDKMDLTQAEAIADLIDASSEEAAKSALQSLQGQFSKRIHTLVESLIHLRIYVEAAIDFPEEEIDFLADGKVAGDLQAIIDNLDAVRKEANQGAIMREGMKVVIAGRPNAGKSSLLNALSGKDSAIVTDIAGTTRDVLREHIHIDGMPLHIIDTAGLRDASDEVEKIGIERAWDEIRQADRVLFMVDGTTTDATDPKEIWPDFIDRLPEQIGITVIRNKADQTQESLGICHVSQPTLIRLSAKTGQGVDALRNHLKECMGFSGNSEGGFMARRRHLDALQRAAEHLLIGQEQLEGYMAGEILAEELRIAQQHLNEITGEFSSDDLLGRIFSSFCIGK.

Residues Arg22, Glu79, and Lys119 each coordinate (6S)-5-formyl-5,6,7,8-tetrahydrofolate. One can recognise a TrmE-type G domain in the interval 215–376 (GMKVVIAGRP…LRNHLKECMG (162 aa)). Position 225 (Asn225) interacts with K(+). Residues 225-230 (NAGKSS), 244-250 (TDIAGTT), 269-272 (DTAG), and 334-337 (NKAD) contribute to the GTP site. Ser229 provides a ligand contact to Mg(2+). Residues Thr244, Ile246, and Thr249 each coordinate K(+). Thr250 provides a ligand contact to Mg(2+). Lys453 is a (6S)-5-formyl-5,6,7,8-tetrahydrofolate binding site.

The protein belongs to the TRAFAC class TrmE-Era-EngA-EngB-Septin-like GTPase superfamily. TrmE GTPase family. Homodimer. Heterotetramer of two MnmE and two MnmG subunits. Requires K(+) as cofactor.

It localises to the cytoplasm. Exhibits a very high intrinsic GTPase hydrolysis rate. Involved in the addition of a carboxymethylaminomethyl (cmnm) group at the wobble position (U34) of certain tRNAs, forming tRNA-cmnm(5)s(2)U34. The chain is tRNA modification GTPase MnmE from Vibrio vulnificus (strain CMCP6).